The following is a 229-amino-acid chain: Flavin-dependent thymidylate synthase (229 aa).

Residues 1-217 enclose the ThyX domain; it reads MEFKVLDKGF…PWTFESFLKF (217 aa). FAD is bound by residues Thr-55, 78–80, and Glu-86; that span reads RHR. Residues 75 to 78, 86 to 90, and Arg-156 each bind dUMP; these read QWFR and EASLR. Positions 78 to 88 match the ThyX motif motif; the sequence is RHRIGSFNEAS. FAD contacts are provided by residues 172-174 and Asn-178; that span reads NAR. Arg-183 is a binding site for dUMP. The active-site Involved in ionization of N3 of dUMP, leading to its activation is Arg-183.

Belongs to the thymidylate synthase ThyX family. In terms of assembly, homotetramer. Requires FAD as cofactor.

The enzyme catalyses dUMP + (6R)-5,10-methylene-5,6,7,8-tetrahydrofolate + NADPH + H(+) = dTMP + (6S)-5,6,7,8-tetrahydrofolate + NADP(+). The protein operates within pyrimidine metabolism; dTTP biosynthesis. Functionally, catalyzes the reductive methylation of 2'-deoxyuridine-5'-monophosphate (dUMP) to 2'-deoxythymidine-5'-monophosphate (dTMP) while utilizing 5,10-methylenetetrahydrofolate (mTHF) as the methyl donor, and NADPH and FADH(2) as the reductant. This chain is Flavin-dependent thymidylate synthase, found in Thermosipho melanesiensis (strain DSM 12029 / CIP 104789 / BI429).